The sequence spans 364 residues: Histidinol-phosphate aminotransferase 2 (364 aa).

At Lys-223 the chain carries N6-(pyridoxal phosphate)lysine.

Belongs to the class-II pyridoxal-phosphate-dependent aminotransferase family. Histidinol-phosphate aminotransferase subfamily. As to quaternary structure, homodimer. Requires pyridoxal 5'-phosphate as cofactor.

It catalyses the reaction L-histidinol phosphate + 2-oxoglutarate = 3-(imidazol-4-yl)-2-oxopropyl phosphate + L-glutamate. It functions in the pathway amino-acid biosynthesis; L-histidine biosynthesis; L-histidine from 5-phospho-alpha-D-ribose 1-diphosphate: step 7/9. The sequence is that of Histidinol-phosphate aminotransferase 2 (hisC2) from Oceanobacillus iheyensis (strain DSM 14371 / CIP 107618 / JCM 11309 / KCTC 3954 / HTE831).